Here is a 161-residue protein sequence, read N- to C-terminus: Allophycocyanin beta chain (161 aa).

At Asn-71 the chain carries N4-methylasparagine. Cys-81 contacts (2R,3E)-phycocyanobilin.

It belongs to the phycobiliprotein family. Heterodimer of an alpha and a beta chain. Post-translationally, contains one covalently linked phycocyanobilin chromophore.

It localises to the cellular thylakoid membrane. Its function is as follows. Light-harvesting photosynthetic bile pigment-protein from the phycobiliprotein complex. Allophycocyanin has a maximum absorption at approximately 650 nanometers. This chain is Allophycocyanin beta chain (apcB), found in Thermosynechococcus vestitus (strain NIES-2133 / IAM M-273 / BP-1).